Reading from the N-terminus, the 153-residue chain is Aspartate carbamoyltransferase regulatory chain (153 aa).

Zn(2+) is bound by residues C109, C114, C138, and C141.

This sequence belongs to the PyrI family. In terms of assembly, contains catalytic and regulatory chains. Zn(2+) is required as a cofactor.

Involved in allosteric regulation of aspartate carbamoyltransferase. The polypeptide is Aspartate carbamoyltransferase regulatory chain (Vibrio campbellii (strain ATCC BAA-1116)).